The sequence spans 287 residues: Protease HtpX (287 aa).

2 helical membrane-spanning segments follow: residues Ile-4–Ile-24 and Gly-33–Ile-53. Residue His-139 participates in Zn(2+) binding. Glu-140 is a catalytic residue. His-143 contributes to the Zn(2+) binding site. The next 2 membrane-spanning stretches (helical) occupy residues Leu-154–Ile-174 and Ala-195–Phe-215. Zn(2+) is bound at residue Glu-220.

The protein belongs to the peptidase M48B family. Requires Zn(2+) as cofactor.

It localises to the cell inner membrane. The chain is Protease HtpX from Shewanella sp. (strain MR-4).